The chain runs to 501 residues: Phenylalanine--tRNA ligase alpha subunit (501 aa).

L-phenylalanine contacts are provided by residues T344, Q383–D385, and F424. E426 contributes to the Mg(2+) binding site. Position 449 (F449) interacts with L-phenylalanine.

The protein belongs to the class-II aminoacyl-tRNA synthetase family. Phe-tRNA synthetase alpha subunit type 2 subfamily. Tetramer of two alpha and two beta subunits. It depends on Mg(2+) as a cofactor.

It localises to the cytoplasm. It carries out the reaction tRNA(Phe) + L-phenylalanine + ATP = L-phenylalanyl-tRNA(Phe) + AMP + diphosphate + H(+). The protein is Phenylalanine--tRNA ligase alpha subunit of Thermococcus kodakarensis (strain ATCC BAA-918 / JCM 12380 / KOD1) (Pyrococcus kodakaraensis (strain KOD1)).